Consider the following 362-residue polypeptide: Oxygen-dependent coproporphyrinogen-III oxidase (362 aa).

Residue serine 118 participates in substrate binding. Histidine 122 and histidine 132 together coordinate a divalent metal cation. Histidine 132 serves as the catalytic Proton donor. 134-136 is a substrate binding site; it reads NYR. Residues histidine 166 and histidine 196 each coordinate a divalent metal cation. Residues 286-321 are important for dimerization; it reads YVEFNLVWDRGTIFGLQTNGRTESILMSLPPLVRWE.

Belongs to the aerobic coproporphyrinogen-III oxidase family. Homodimer. Requires a divalent metal cation as cofactor.

Its subcellular location is the cytoplasm. The enzyme catalyses coproporphyrinogen III + O2 + 2 H(+) = protoporphyrinogen IX + 2 CO2 + 2 H2O. The protein operates within porphyrin-containing compound metabolism; protoporphyrin-IX biosynthesis; protoporphyrinogen-IX from coproporphyrinogen-III (O2 route): step 1/1. Functionally, involved in the heme and chlorophyll biosynthesis. Catalyzes the aerobic oxidative decarboxylation of propionate groups of rings A and B of coproporphyrinogen-III to yield the vinyl groups in protoporphyrinogen-IX. The chain is Oxygen-dependent coproporphyrinogen-III oxidase from Synechococcus sp. (strain CC9605).